Consider the following 254-residue polypeptide: Thiazole synthase (254 aa).

The Schiff-base intermediate with DXP role is filled by lysine 95. Residues glycine 156, 182–183 (AG), and 204–205 (NT) contribute to the 1-deoxy-D-xylulose 5-phosphate site.

The protein belongs to the ThiG family. In terms of assembly, homotetramer. Forms heterodimers with either ThiH or ThiS.

The protein resides in the cytoplasm. The enzyme catalyses [ThiS sulfur-carrier protein]-C-terminal-Gly-aminoethanethioate + 2-iminoacetate + 1-deoxy-D-xylulose 5-phosphate = [ThiS sulfur-carrier protein]-C-terminal Gly-Gly + 2-[(2R,5Z)-2-carboxy-4-methylthiazol-5(2H)-ylidene]ethyl phosphate + 2 H2O + H(+). The protein operates within cofactor biosynthesis; thiamine diphosphate biosynthesis. In terms of biological role, catalyzes the rearrangement of 1-deoxy-D-xylulose 5-phosphate (DXP) to produce the thiazole phosphate moiety of thiamine. Sulfur is provided by the thiocarboxylate moiety of the carrier protein ThiS. In vitro, sulfur can be provided by H(2)S. This is Thiazole synthase from Shewanella sp. (strain MR-7).